Here is a 951-residue protein sequence, read N- to C-terminus: MATGTGKHKLLSTGPTEPWSIREKLCLASSVMRSGDQNWVSVSRAIKPFAEPGRPPDWFSQKHCASQYSELLETTETPKRKRGEKGEVVETVEDVIVRKLTAERVEELKKVIKETQERYRRLKRDAELIQAGHMDSRLDELCNDIAMKKKLEEEEAEVKRKATDAAYQARQAVKTPPRRLPTVMVRSPVDSASPGGDYPLGDLTPTTMEEATSGVTPGTLPSTPVTSFPGIPDTLPPGSAPLEAPMTPITDDSPQKKMLGQKATPPPSPLLSELLKKGSLLPTSPRLVNESEMPVPPGHLNSTGVLLEVGGVLPMIHGGEIQPTTSAVAASPAASGAPTLSRLLEAGPTQFTTPLPSFTTVASEPPVKLVPPPVESVSQATIVMMPALPAPSSAAAVSTSESGAPVSQPEPCVPLEAVGDPHTVTVSMDSNEISMIINSIKEECFRSGVAEAPGGSKAPSIDGKEDLDLAEKMDIAVSYTGEELDFETVGDIIAIIEDKVDDHPEVLDVAAVEAALSFCEENDDPQSLPGPWEHPIQQERDKPVPLPAPEMTVKQERLDFEESENKGLHDLVDIRDSGVEIKVEPTEPEPGMSGAEIVAGVGPVPSMEPPELRSQDSDEEPRSSAAGDIGEADGSSGKGDERPLSAVKTEASPESMLSPSHGSNLIEDPLEAETQHKFEMSDSLKEESGTIFGSQIKDAPGDDEEEDGVSEAASLEEPKEEDQGEGYLSEMDNEPPVSESDDGFSIHNATLQSHTLADSIPSSPASSQFSVCSEDQEAIQAQKIWKKAIMLVWRAAANHRYANVFLQPVTDDIAPGYHSIVQRPMDLSTIKKNIENGLIRSTAEFQRDIMLMFQNAVMYNSSDHDVYHMAVEMQRDVLEQIQQFLATQLIMQTSESGISAKSLRGRDSTRKQDASEKDSVPMGSPAFLLSLFDGGTRGRRCAIEADMKMKK.

At Lys85 the chain carries N6-acetyllysine. A coiled-coil region spans residues 97–171 (VRKLTAERVE…ATDAAYQARQ (75 aa)). A disordered region spans residues 161–273 (KATDAAYQAR…TPPPSPLLSE (113 aa)). The segment covering 204–226 (TPTTMEEATSGVTPGTLPSTPVT) has biased composition (polar residues). Residues Ser456 and Ser460 each carry the phosphoserine modification. The segment at 520 to 547 (EENDDPQSLPGPWEHPIQQERDKPVPLP) is disordered. A Glycyl lysine isopeptide (Lys-Gly) (interchain with G-Cter in SUMO2) cross-link involves residue Lys542. Position 554 is an N6-acetyllysine; alternate (Lys554). Residue Lys554 forms a Glycyl lysine isopeptide (Lys-Gly) (interchain with G-Cter in SUMO1); alternate linkage. Residue Lys554 forms a Glycyl lysine isopeptide (Lys-Gly) (interchain with G-Cter in SUMO2); alternate linkage. A Glycyl lysine isopeptide (Lys-Gly) (interchain with G-Cter in SUMO2) cross-link involves residue Lys582. Residues 584-745 (EPTEPEPGMS…PVSESDDGFS (162 aa)) form a disordered region. A compositionally biased stretch (basic and acidic residues) spans 610 to 622 (PELRSQDSDEEPR). A Glycyl lysine isopeptide (Lys-Gly) (interchain with G-Cter in SUMO2) cross-link involves residue Lys648. At Ser652 the chain carries Phosphoserine. The segment covering 673 to 688 (ETQHKFEMSDSLKEES) has biased composition (basic and acidic residues). Lys685 participates in a covalent cross-link: Glycyl lysine isopeptide (Lys-Gly) (interchain with G-Cter in SUMO2). 3 positions are modified to phosphoserine: Ser694, Ser710, and Ser714. The 106-residue stretch at 779-884 (IQAQKIWKKA…RDVLEQIQQF (106 aa)) folds into the Bromo domain. The disordered stretch occupies residues 900–922 (AKSLRGRDSTRKQDASEKDSVPM). The segment covering 904–919 (RGRDSTRKQDASEKDS) has biased composition (basic and acidic residues).

Component of the NuA4 histone acetyltransferase complex which contains the catalytic subunit KAT5/TIP60 and the subunits EP400, TRRAP/PAF400, BRD8/SMAP, EPC1, DMAP1/DNMAP1, RUVBL1/TIP49, RUVBL2, ING3, actin, ACTL6A/BAF53A, MORF4L1/MRG15, MORF4L2/MRGX, MRGBP, YEATS4/GAS41, VPS72/YL1 and MEAF6. Component of a NuA4-related complex which contains EP400, TRRAP/PAF400, SRCAP, BRD8/SMAP, EPC1, DMAP1/DNMAP1, RUVBL1/TIP49, RUVBL2, actin, ACTL6A/BAF53A, VPS72 and YEATS4/GAS41. BRD8 isoform 2 interacts with RXRA/NR2B1 and THRB/ERBA2. Component of a SWR1-like complex.

It is found in the nucleus. Functionally, may act as a coactivator during transcriptional activation by hormone-activated nuclear receptors (NR). Stimulates transcriptional activation by AR/DHTR, ESR1/NR3A1, RXRA/NR2B1 and THRB/ERBA2. Component of the NuA4 histone acetyltransferase (HAT) complex which is involved in transcriptional activation of select genes principally by acetylation of nucleosomal histones H4 and H2A. This modification may both alter nucleosome - DNA interactions and promote interaction of the modified histones with other proteins which positively regulate transcription. This complex may be required for the activation of transcriptional programs associated with oncogene and proto-oncogene mediated growth induction, tumor suppressor mediated growth arrest and replicative senescence, apoptosis, and DNA repair. NuA4 may also play a direct role in DNA repair when recruited to sites of DNA damage. Component of a SWR1-like complex that specifically mediates the removal of histone H2A.Z/H2AZ1 from the nucleosome. The protein is Bromodomain-containing protein 8 (Brd8) of Mus musculus (Mouse).